The chain runs to 120 residues: Phosphoribosyl-AMP cyclohydrolase (120 aa).

A Mg(2+)-binding site is contributed by Asp75. Residue Cys76 coordinates Zn(2+). The Mg(2+) site is built by Asp77 and Asp79. Zn(2+) is bound by residues Cys92 and Cys99.

This sequence belongs to the PRA-CH family. As to quaternary structure, homodimer. Mg(2+) is required as a cofactor. The cofactor is Zn(2+).

It is found in the cytoplasm. It carries out the reaction 1-(5-phospho-beta-D-ribosyl)-5'-AMP + H2O = 1-(5-phospho-beta-D-ribosyl)-5-[(5-phospho-beta-D-ribosylamino)methylideneamino]imidazole-4-carboxamide. Its pathway is amino-acid biosynthesis; L-histidine biosynthesis; L-histidine from 5-phospho-alpha-D-ribose 1-diphosphate: step 3/9. Catalyzes the hydrolysis of the adenine ring of phosphoribosyl-AMP. This chain is Phosphoribosyl-AMP cyclohydrolase, found in Methanosarcina acetivorans (strain ATCC 35395 / DSM 2834 / JCM 12185 / C2A).